The sequence spans 151 residues: Ribosome maturation factor RimP (151 aa).

The protein belongs to the RimP family.

The protein resides in the cytoplasm. In terms of biological role, required for maturation of 30S ribosomal subunits. The chain is Ribosome maturation factor RimP from Shewanella amazonensis (strain ATCC BAA-1098 / SB2B).